A 448-amino-acid chain; its full sequence is Cyclic dof factor 3 (448 aa).

The segment at A26–K108 is disordered. Residues V29–G39 are compositionally biased toward acidic residues. Residues G40 to D54 are compositionally biased toward basic and acidic residues. Over residues K55–K69 the composition is skewed to low complexity. Residues S80–D99 are compositionally biased toward polar residues. A Dof-type zinc finger spans residues L110 to S164. Residues C112, C115, C137, and C140 each contribute to the Zn(2+) site. 2 disordered regions span residues N243 to G269 and S332 to A370. Composition is skewed to polar residues over residues D246–H259 and S332–T347. The span at H351–Q368 shows a compositional bias: basic and acidic residues.

Interacts with ADO2 (via kelch repeats) and ADO3 (via kelch repeats). In terms of tissue distribution, expressed in the vasculature of cotyledons and hypocotyls, leaves and roots.

The protein resides in the nucleus. In terms of biological role, transcription factor that binds specifically to a 5'-AA[AG]G-3' consensus core sequence. Regulates a photoperiodic flowering response. Transcriptional repressor of 'CONSTANS' expression. The sequence is that of Cyclic dof factor 3 (CDF3) from Arabidopsis thaliana (Mouse-ear cress).